Consider the following 137-residue polypeptide: uncharacterized protein (137 aa).

The tract at residues 67–87 is disordered; sequence KSERQHQRVHHELPHDKPRQS. Basic and acidic residues predominate over residues 70–85; sequence RQHQRVHHELPHDKPR.

This is an uncharacterized protein from Human cytomegalovirus (strain AD169) (HHV-5).